The chain runs to 455 residues: tRNA modification GTPase MnmE (455 aa).

Arg24, Glu81, and Lys120 together coordinate (6S)-5-formyl-5,6,7,8-tetrahydrofolate. One can recognise a TrmE-type G domain in the interval 216-378; sequence GMTVVIAGRP…LREHLKACMG (163 aa). K(+) is bound at residue Asn226. Residues 226–231, 245–251, 270–273, 335–338, and 359–361 each bind GTP; these read NAGKSS, TDIAGTT, DTAG, NKAD, and SAR. A Mg(2+)-binding site is contributed by Ser230. Thr245, Ile247, and Thr250 together coordinate K(+). Thr251 is a Mg(2+) binding site. Lys455 lines the (6S)-5-formyl-5,6,7,8-tetrahydrofolate pocket.

It belongs to the TRAFAC class TrmE-Era-EngA-EngB-Septin-like GTPase superfamily. TrmE GTPase family. Homodimer. Heterotetramer of two MnmE and two MnmG subunits. The cofactor is K(+).

It localises to the cytoplasm. Functionally, exhibits a very high intrinsic GTPase hydrolysis rate. Involved in the addition of a carboxymethylaminomethyl (cmnm) group at the wobble position (U34) of certain tRNAs, forming tRNA-cmnm(5)s(2)U34. This chain is tRNA modification GTPase MnmE, found in Pseudomonas aeruginosa (strain UCBPP-PA14).